A 156-amino-acid chain; its full sequence is Ribonuclease pancreatic (156 aa).

A signal peptide spans 1–28 (MALEKSLALLPLLVLVLLVLGWVQPSLG). Residues 33–43 (AQKFQRQHMDS) are compositionally biased toward basic and acidic residues. The segment at 33 to 52 (AQKFQRQHMDSDGSPSSNPT) is disordered. Substrate-binding residues include Lys-35 and Arg-38. The active-site Proton acceptor is His-40. 4 disulfides stabilise this stretch: Cys-54–Cys-112, Cys-68–Cys-123, Cys-86–Cys-138, and Cys-93–Cys-100. N-linked (GlcNAc...) asparagine glycosylation is present at Asn-62. Residues 69-73 (KPVNT), Lys-94, and Arg-113 each bind substrate. N-linked (GlcNAc...) asparagine glycosylation occurs at Asn-116. His-147 (proton donor) is an active-site residue.

It belongs to the pancreatic ribonuclease family. In terms of assembly, monomer. Interacts with and forms tight 1:1 complexes with RNH1. Dimerization of two such complexes may occur. Interaction with RNH1 inhibits this protein.

The protein resides in the secreted. It carries out the reaction an [RNA] containing cytidine + H2O = an [RNA]-3'-cytidine-3'-phosphate + a 5'-hydroxy-ribonucleotide-3'-[RNA].. It catalyses the reaction an [RNA] containing uridine + H2O = an [RNA]-3'-uridine-3'-phosphate + a 5'-hydroxy-ribonucleotide-3'-[RNA].. Functionally, endonuclease that catalyzes the cleavage of RNA on the 3' side of pyrimidine nucleotides. Acts on single-stranded and double-stranded RNA. This chain is Ribonuclease pancreatic (RNASE1), found in Saguinus oedipus (Cotton-top tamarin).